The sequence spans 330 residues: Beta-ketoacyl-[acyl-carrier-protein] synthase III (330 aa).

Active-site residues include cysteine 114 and histidine 257. The tract at residues 258–262 (QANLR) is ACP-binding. Asparagine 287 is a catalytic residue.

The protein belongs to the thiolase-like superfamily. FabH family. As to quaternary structure, homodimer.

It localises to the cytoplasm. The enzyme catalyses malonyl-[ACP] + acetyl-CoA + H(+) = 3-oxobutanoyl-[ACP] + CO2 + CoA. It participates in lipid metabolism; fatty acid biosynthesis. Its function is as follows. Catalyzes the condensation reaction of fatty acid synthesis by the addition to an acyl acceptor of two carbons from malonyl-ACP. Catalyzes the first condensation reaction which initiates fatty acid synthesis and may therefore play a role in governing the total rate of fatty acid production. Possesses both acetoacetyl-ACP synthase and acetyl transacylase activities. Its substrate specificity determines the biosynthesis of branched-chain and/or straight-chain of fatty acids. The protein is Beta-ketoacyl-[acyl-carrier-protein] synthase III of Nitratidesulfovibrio vulgaris (strain ATCC 29579 / DSM 644 / CCUG 34227 / NCIMB 8303 / VKM B-1760 / Hildenborough) (Desulfovibrio vulgaris).